A 232-amino-acid chain; its full sequence is Large ribosomal subunit protein uL1 (232 aa).

It belongs to the universal ribosomal protein uL1 family. In terms of assembly, part of the 50S ribosomal subunit.

Binds directly to 23S rRNA. The L1 stalk is quite mobile in the ribosome, and is involved in E site tRNA release. In terms of biological role, protein L1 is also a translational repressor protein, it controls the translation of the L11 operon by binding to its mRNA. In Bacillus licheniformis (strain ATCC 14580 / DSM 13 / JCM 2505 / CCUG 7422 / NBRC 12200 / NCIMB 9375 / NCTC 10341 / NRRL NRS-1264 / Gibson 46), this protein is Large ribosomal subunit protein uL1.